The primary structure comprises 354 residues: DnaJ homolog shv (354 aa).

Positions 1–22 (MQLIKCLVIIQLSLLLVEESFA) are cleaved as a signal peptide. The region spanning 25–90 (DFYKILNVKK…DKRKTYDRCG (66 aa)) is the J domain. N-linked (GlcNAc...) asparagine glycans are attached at residues asparagine 260 and asparagine 312.

As to expression, in the testes, detected at low levels in somatic hub cells, cyst stem cells and the apical tip (at protein level). Levels in the testes decrease with age (at protein level). Expressed at low levels in hub cells, cyst stem cells and germline stem cells, and at high levels in spermatocytes and cyst cells.

It localises to the nucleus. It is found in the cell membrane. The protein resides in the secreted. Its function is as follows. Maintains stem cell niche architecture in the testes. Activates an extracellular integrin beta-PS pathway which regulates DE-cadherin (shg) levels in somatic hub cells, and is essential for maintaining the number of germline stem cells and the structure and localization of hub cells. The chain is DnaJ homolog shv from Drosophila melanogaster (Fruit fly).